The sequence spans 83 residues: Small ribosomal subunit protein uS17 (83 aa).

It belongs to the universal ribosomal protein uS17 family. In terms of assembly, part of the 30S ribosomal subunit.

In terms of biological role, one of the primary rRNA binding proteins, it binds specifically to the 5'-end of 16S ribosomal RNA. The protein is Small ribosomal subunit protein uS17 of Aliarcobacter butzleri (strain RM4018) (Arcobacter butzleri).